The sequence spans 267 residues: Type II pantothenate kinase (267 aa).

6–13 (DAGGTLIK) serves as a coordination point for ATP. Residue Glu70 is the Proton acceptor of the active site. ATP contacts are provided by residues Thr99, 121–125 (GGMIQ), Tyr137, and Ser225.

It belongs to the type II pantothenate kinase family. Homodimer.

It localises to the cytoplasm. The enzyme catalyses (R)-pantothenate + ATP = (R)-4'-phosphopantothenate + ADP + H(+). The protein operates within cofactor biosynthesis; coenzyme A biosynthesis; CoA from (R)-pantothenate: step 1/5. In terms of biological role, catalyzes the phosphorylation of pantothenate (Pan), the first step in CoA biosynthesis. This Staphylococcus aureus (strain bovine RF122 / ET3-1) protein is Type II pantothenate kinase.